Here is a 491-residue protein sequence, read N- to C-terminus: Ketol-acid reductoisomerase (NADP(+)) (491 aa).

Residues 15 to 208 (AQLGKCRFMG…GGHRAGVLES (194 aa)) enclose the KARI N-terminal Rossmann domain. Residues 45–48 (CGAQ), Arg-68, Arg-76, Ser-78, and 108–110 (DKQ) each bind NADP(+). His-132 is a catalytic residue. Gly-158 is an NADP(+) binding site. KARI C-terminal knotted domains are found at residues 209-344 (SFVA…TAPQ) and 345-484 (FEGK…MTDM). Mg(2+) is bound by residues Asp-217, Glu-221, Glu-389, and Glu-393. Ser-414 lines the substrate pocket.

This sequence belongs to the ketol-acid reductoisomerase family. It depends on Mg(2+) as a cofactor.

The catalysed reaction is (2R)-2,3-dihydroxy-3-methylbutanoate + NADP(+) = (2S)-2-acetolactate + NADPH + H(+). The enzyme catalyses (2R,3R)-2,3-dihydroxy-3-methylpentanoate + NADP(+) = (S)-2-ethyl-2-hydroxy-3-oxobutanoate + NADPH + H(+). The protein operates within amino-acid biosynthesis; L-isoleucine biosynthesis; L-isoleucine from 2-oxobutanoate: step 2/4. It participates in amino-acid biosynthesis; L-valine biosynthesis; L-valine from pyruvate: step 2/4. Involved in the biosynthesis of branched-chain amino acids (BCAA). Catalyzes an alkyl-migration followed by a ketol-acid reduction of (S)-2-acetolactate (S2AL) to yield (R)-2,3-dihydroxy-isovalerate. In the isomerase reaction, S2AL is rearranged via a Mg-dependent methyl migration to produce 3-hydroxy-3-methyl-2-ketobutyrate (HMKB). In the reductase reaction, this 2-ketoacid undergoes a metal-dependent reduction by NADPH to yield (R)-2,3-dihydroxy-isovalerate. This Salmonella heidelberg (strain SL476) protein is Ketol-acid reductoisomerase (NADP(+)).